The sequence spans 84 residues: Large ribosomal subunit protein bL27 (84 aa).

Residues 1 to 25 (MSHKKAGGSTRNGRDSNAQRRGVKK) form a disordered region.

Belongs to the bacterial ribosomal protein bL27 family.

This Desulforapulum autotrophicum (strain ATCC 43914 / DSM 3382 / VKM B-1955 / HRM2) (Desulfobacterium autotrophicum) protein is Large ribosomal subunit protein bL27.